Here is a 32-residue protein sequence, read N- to C-terminus: SFCIPFKPCKSDENCCKKFKCKTTGIVKLCRW.

3 disulfide bridges follow: C3/C16, C9/C21, and C15/C30.

Expressed by the venom gland.

The protein resides in the secreted. Functionally, blocks voltage-gated sodium channels (Nav). Causes tail erection, scratching and a reduction in mobility at a dose level of 1.40 mg/mouse. This chain is U5-ctenitoxin-Pn1a, found in Phoneutria nigriventer (Brazilian armed spider).